We begin with the raw amino-acid sequence, 156 residues long: Small ribosomal subunit protein uS7 (156 aa).

It belongs to the universal ribosomal protein uS7 family. In terms of assembly, part of the 30S ribosomal subunit. Contacts proteins S9 and S11.

Functionally, one of the primary rRNA binding proteins, it binds directly to 16S rRNA where it nucleates assembly of the head domain of the 30S subunit. Is located at the subunit interface close to the decoding center, probably blocks exit of the E-site tRNA. The polypeptide is Small ribosomal subunit protein uS7 (Moorella thermoacetica (strain ATCC 39073 / JCM 9320)).